Reading from the N-terminus, the 38-residue chain is Photosystem II reaction center protein L (38 aa).

Residues 17-37 (SLYWGLLLIFVLAVPFSNYFF) traverse the membrane as a helical segment.

The protein belongs to the PsbL family. PSII is composed of 1 copy each of membrane proteins PsbA, PsbB, PsbC, PsbD, PsbE, PsbF, PsbH, PsbI, PsbJ, PsbK, PsbL, PsbM, PsbT, PsbX, PsbY, PsbZ, Psb30/Ycf12, at least 3 peripheral proteins of the oxygen-evolving complex and a large number of cofactors. It forms dimeric complexes.

It localises to the plastid. Its subcellular location is the chloroplast thylakoid membrane. Its function is as follows. One of the components of the core complex of photosystem II (PSII). PSII is a light-driven water:plastoquinone oxidoreductase that uses light energy to abstract electrons from H(2)O, generating O(2) and a proton gradient subsequently used for ATP formation. It consists of a core antenna complex that captures photons, and an electron transfer chain that converts photonic excitation into a charge separation. This subunit is found at the monomer-monomer interface and is required for correct PSII assembly and/or dimerization. The polypeptide is Photosystem II reaction center protein L (Cedrus deodara (Deodar cedar)).